The chain runs to 426 residues: L-ascorbate peroxidase T, chloroplastic (426 aa).

Histidine 112 (proton acceptor) is an active-site residue. Histidine 241 lines the heme b pocket. Threonine 242 is a K(+) binding site. The disordered stretch occupies residues arginine 245 to glycine 269. A compositionally biased stretch (basic and acidic residues) spans alanine 246 to tyrosine 260. Residues threonine 274 and aspartate 281 each contribute to the K(+) site. Residues tyrosine 397–glycine 417 form a helical membrane-spanning segment.

Belongs to the peroxidase family. Ascorbate peroxidase subfamily. Heme b serves as cofactor.

It localises to the plastid. Its subcellular location is the chloroplast thylakoid membrane. The enzyme catalyses L-ascorbate + H2O2 = L-dehydroascorbate + 2 H2O. Plays a key role in hydrogen peroxide removal. In Arabidopsis thaliana (Mouse-ear cress), this protein is L-ascorbate peroxidase T, chloroplastic (APXT).